The primary structure comprises 218 residues: Small ribosomal subunit protein uS3c (218 aa).

Positions 43 to 118 (IKNYVQKNMR…KLNIAITRIA (76 aa)) constitute a KH type-2 domain.

The protein belongs to the universal ribosomal protein uS3 family. As to quaternary structure, part of the 30S ribosomal subunit.

Its subcellular location is the plastid. The protein resides in the chloroplast. This chain is Small ribosomal subunit protein uS3c (rps3), found in Buxus microphylla (Littleleaf boxwood).